Here is a 185-residue protein sequence, read N- to C-terminus: Ribosome-recycling factor (185 aa).

It belongs to the RRF family.

It localises to the cytoplasm. Its function is as follows. Responsible for the release of ribosomes from messenger RNA at the termination of protein biosynthesis. May increase the efficiency of translation by recycling ribosomes from one round of translation to another. This chain is Ribosome-recycling factor, found in Sulfurovum sp. (strain NBC37-1).